A 621-amino-acid chain; its full sequence is Beta-conglycinin alpha' subunit (621 aa).

An N-terminal signal peptide occupies residues 1-24 (MMRARFPLLLLGVVFLASVSVSFG). The propeptide occupies 25 to 62 (IAYWEKQNPSHNKCLRSCNSEKDSYRNQACHARCNLLK). A disordered region spans residues 64–214 (EEEEECEEGQ…RHKNKNPFHF (151 aa)). 2 stretches are compositionally biased toward basic and acidic residues: residues 80–92 (QHPERERQQHGEK) and 111–173 (PHQE…QGKE). Residues 174–196 (SEEEEEDQDEDEEQDKESQESEG) are compositionally biased toward acidic residues. Cupin type-1 domains lie at 212–370 (FHFN…EEIN) and 422–583 (FNLR…KDIE). N-linked (GlcNAc...) asparagine glycans are attached at residues Asn-277 and Asn-533. A necessary for sorting to protein storage vacuole region spans residues 612 to 621 (PLSSILRAFY).

Belongs to the 7S seed storage protein family. As to quaternary structure, the alpha-, alpha'-, and beta-subunits associate in various combinations to form trimeric proteins.

The protein localises to the vacuole. It is found in the aleurone grain. The protein resides in the endoplasmic reticulum. It localises to the protein storage vacuole. Its function is as follows. Seed storage protein. Accumulates during seed development and is hydrolyzed after germination to provide a carbon and nitrogen source for the developing seedling. This chain is Beta-conglycinin alpha' subunit, found in Glycine max (Soybean).